Consider the following 587-residue polypeptide: Putative ankyrin repeat protein L66 (587 aa).

ANK repeat units follow at residues 77–106 (DKNL…DIRI), 108–136 (NNYP…DVSD), 137–166 (YDNY…DVHC), 168–196 (DNAP…DVNY), 199–228 (NEDL…NIHF), 230–256 (DSLI…ILGN), 259–288 (NIRN…SIEN), 302–331 (FKKN…NVAF), 333–360 (DNLP…NVKI), 361–390 (NYEN…NVKD), 392–418 (TAIY…DLIK), 420–448 (HNEI…INKS), 449–478 (IYDK…DIKS), 480–507 (KFHD…KINN), 509–537 (YKNL…NMKC), and 539–567 (RIDT…KLIC).

The polypeptide is Putative ankyrin repeat protein L66 (Acanthamoeba polyphaga mimivirus (APMV)).